A 762-amino-acid chain; its full sequence is 5-methyltetrahydropteroyltriglutamate--homocysteine methyltransferase (762 aa).

5-methyltetrahydropteroyltri-L-glutamate is bound by residues 17–20 (REWK) and Lys111. L-homocysteine is bound by residues 435–437 (IGS) and Glu488. Residues 435 to 437 (IGS) and Glu488 each bind L-methionine. 5-methyltetrahydropteroyltri-L-glutamate contacts are provided by residues 519-520 (RC) and Trp565. Asp603 contributes to the L-homocysteine binding site. L-methionine is bound at residue Asp603. Residue Glu609 participates in 5-methyltetrahydropteroyltri-L-glutamate binding. Zn(2+) is bound by residues His645, Cys647, and Glu669. Residue His698 is the Proton donor of the active site. Cys730 contacts Zn(2+).

The protein belongs to the vitamin-B12 independent methionine synthase family. The cofactor is Zn(2+).

It catalyses the reaction 5-methyltetrahydropteroyltri-L-glutamate + L-homocysteine = tetrahydropteroyltri-L-glutamate + L-methionine. Its pathway is amino-acid biosynthesis; L-methionine biosynthesis via de novo pathway; L-methionine from L-homocysteine (MetE route): step 1/1. Functionally, catalyzes the transfer of a methyl group from 5-methyltetrahydrofolate to homocysteine resulting in methionine formation. This Bacillus cereus (strain AH820) protein is 5-methyltetrahydropteroyltriglutamate--homocysteine methyltransferase.